Reading from the N-terminus, the 124-residue chain is MTEVTKINPSTAITELEPYEMAQTNKEVPTTSLLSKDYYGHSIEEPDENNPTRWRYERPLDTVRAWQYLIDCDENFKTKPHREQNQYRPTADSFRPLSFASMESKLTQRLSRHLSKTSSRHSRL.

Interacts with dil1.

This is an uncharacterized protein from Schizosaccharomyces pombe (strain 972 / ATCC 24843) (Fission yeast).